Here is a 436-residue protein sequence, read N- to C-terminus: GTPase Der (436 aa).

EngA-type G domains are found at residues 4 to 167 (PTVA…PVEE) and 175 to 351 (IRFS…ESQN). Residues 10 to 17 (GRPNVGKS), 57 to 61 (DTGGI), 119 to 122 (NKVD), 181 to 188 (GRPNVGKS), 229 to 233 (DTAGM), and 294 to 297 (NKWD) contribute to the GTP site. In terms of domain architecture, KH-like spans 352–436 (KRIPSAVLND…PIHLIARKRK (85 aa)).

Belongs to the TRAFAC class TrmE-Era-EngA-EngB-Septin-like GTPase superfamily. EngA (Der) GTPase family. As to quaternary structure, associates with the 50S ribosomal subunit.

Functionally, GTPase that plays an essential role in the late steps of ribosome biogenesis. The chain is GTPase Der from Streptococcus uberis (strain ATCC BAA-854 / 0140J).